The following is a 211-amino-acid chain: Uracil phosphoribosyltransferase (211 aa).

5-phospho-alpha-D-ribose 1-diphosphate is bound by residues arginine 78, arginine 103, and 130–138; that span reads DPMLATGGT. Uracil is bound by residues isoleucine 195 and 200–202; that span reads GDA. Aspartate 201 is a binding site for 5-phospho-alpha-D-ribose 1-diphosphate.

The protein belongs to the UPRTase family. Requires Mg(2+) as cofactor.

The catalysed reaction is UMP + diphosphate = 5-phospho-alpha-D-ribose 1-diphosphate + uracil. Its pathway is pyrimidine metabolism; UMP biosynthesis via salvage pathway; UMP from uracil: step 1/1. Allosterically activated by GTP. Functionally, catalyzes the conversion of uracil and 5-phospho-alpha-D-ribose 1-diphosphate (PRPP) to UMP and diphosphate. This chain is Uracil phosphoribosyltransferase, found in Streptomyces griseus subsp. griseus (strain JCM 4626 / CBS 651.72 / NBRC 13350 / KCC S-0626 / ISP 5235).